Here is a 916-residue protein sequence, read N- to C-terminus: Translation initiation factor IF-2 (916 aa).

The tract at residues 55 to 324 (EPKAVTPTSK…NHNANLKPVT (270 aa)) is disordered. The segment covering 77–88 (AAEPKAAATKPA) has biased composition (low complexity). 3 stretches are compositionally biased toward basic and acidic residues: residues 98 to 121 (FKAE…ERRN), 129 to 161 (RQKD…DNRN), and 198 to 212 (RQSE…EAKR). The span at 227–250 (KEQPTVEAAATAAPQAQPQTVEQV) shows a compositional bias: low complexity. Over residues 264–281 (ARPDKSRDFSHENEDGPK) the composition is skewed to basic and acidic residues. Low complexity predominate over residues 291-304 (KQNQVRNQKNSNWN). The segment covering 305–314 (KKNKKSKNNR) has biased composition (basic residues). In terms of domain architecture, tr-type G spans 418–585 (ERAPVVTIMG…TVLLVAEIQE (168 aa)). The tract at residues 427-434 (GHVDHGKT) is G1. GTP is bound at residue 427–434 (GHVDHGKT). The interval 452-456 (GITQH) is G2. Residues 473–476 (DTPG) are G3. GTP-binding positions include 473-477 (DTPGH) and 527-530 (NKID). The G4 stretch occupies residues 527 to 530 (NKID). A G5 region spans residues 563–565 (SAK).

The protein belongs to the TRAFAC class translation factor GTPase superfamily. Classic translation factor GTPase family. IF-2 subfamily.

The protein localises to the cytoplasm. Functionally, one of the essential components for the initiation of protein synthesis. Protects formylmethionyl-tRNA from spontaneous hydrolysis and promotes its binding to the 30S ribosomal subunits. Also involved in the hydrolysis of GTP during the formation of the 70S ribosomal complex. This is Translation initiation factor IF-2 from Streptococcus mutans serotype c (strain ATCC 700610 / UA159).